The primary structure comprises 144 residues: Large ribosomal subunit protein uL16 (144 aa).

The protein belongs to the universal ribosomal protein uL16 family. Part of the 50S ribosomal subunit.

Functionally, binds 23S rRNA and is also seen to make contacts with the A and possibly P site tRNAs. This is Large ribosomal subunit protein uL16 from Bacillus cereus (strain ATCC 10987 / NRS 248).